The chain runs to 267 residues: 5'-nucleotidase SurE (267 aa).

Residues Asp9, Asp10, Ser41, and Asn95 each contribute to the a divalent metal cation site.

Belongs to the SurE nucleotidase family. Requires a divalent metal cation as cofactor.

The protein resides in the cytoplasm. It carries out the reaction a ribonucleoside 5'-phosphate + H2O = a ribonucleoside + phosphate. Functionally, nucleotidase that shows phosphatase activity on nucleoside 5'-monophosphates. The protein is 5'-nucleotidase SurE of Aeropyrum pernix (strain ATCC 700893 / DSM 11879 / JCM 9820 / NBRC 100138 / K1).